The following is a 301-amino-acid chain: Nucleotide-binding protein ELI_02120 (301 aa).

12-19 (GMSGAGKS) serves as a coordination point for ATP. GTP is bound at residue 62-65 (DSRT).

Belongs to the RapZ-like family.

Its function is as follows. Displays ATPase and GTPase activities. This is Nucleotide-binding protein ELI_02120 from Erythrobacter litoralis (strain HTCC2594).